Consider the following 79-residue polypeptide: Sec-independent protein translocase protein TatA (79 aa).

A helical transmembrane segment spans residues 1 to 21 (MGGFTSIWHWVIVLLVIVLLF). A disordered region spans residues 48-79 (EEEAKNEPKTLDAQVAQTKVHETSEIKSKQES). Residues 66–79 (KVHETSEIKSKQES) show a composition bias toward basic and acidic residues.

Belongs to the TatA/E family. The Tat system comprises two distinct complexes: a TatABC complex, containing multiple copies of TatA, TatB and TatC subunits, and a separate TatA complex, containing only TatA subunits. Substrates initially bind to the TatABC complex, which probably triggers association of the separate TatA complex to form the active translocon.

The protein localises to the cell inner membrane. Part of the twin-arginine translocation (Tat) system that transports large folded proteins containing a characteristic twin-arginine motif in their signal peptide across membranes. TatA could form the protein-conducting channel of the Tat system. The sequence is that of Sec-independent protein translocase protein TatA from Helicobacter pylori (strain Shi470).